We begin with the raw amino-acid sequence, 531 residues long: Peptide chain release factor 3 (531 aa).

The 269-residue stretch at 10-278 (ARRRTFAIIS…DFVEHAPGPL (269 aa)) folds into the tr-type G domain. GTP contacts are provided by residues 19–26 (SHPDAGKT), 87–91 (DTPGH), and 141–144 (NKLD).

Belongs to the TRAFAC class translation factor GTPase superfamily. Classic translation factor GTPase family. PrfC subfamily.

The protein resides in the cytoplasm. Functionally, increases the formation of ribosomal termination complexes and stimulates activities of RF-1 and RF-2. It binds guanine nucleotides and has strong preference for UGA stop codons. It may interact directly with the ribosome. The stimulation of RF-1 and RF-2 is significantly reduced by GTP and GDP, but not by GMP. The polypeptide is Peptide chain release factor 3 (Thioalkalivibrio sulfidiphilus (strain HL-EbGR7)).